Reading from the N-terminus, the 363-residue chain is GTPase Obg (363 aa).

Positions 1–159 (MKFLDEAKVY…KTIWLRLKLI (159 aa)) constitute an Obg domain. Positions 160-327 (ADAGLVGLPN…VLRALRDIIV (168 aa)) constitute an OBG-type G domain. GTP-binding positions include 166 to 173 (GLPNAGKS), 191 to 195 (FTTLH), 212 to 215 (DIPG), 279 to 282 (SQID), and 308 to 310 (SAV). The Mg(2+) site is built by Ser-173 and Thr-193. The tract at residues 332–363 (EEKPAKAPKLRHRDMIVSEENNQGEDGADDQP) is disordered. A compositionally biased stretch (acidic residues) spans 353–363 (NQGEDGADDQP).

Belongs to the TRAFAC class OBG-HflX-like GTPase superfamily. OBG GTPase family. As to quaternary structure, monomer. Mg(2+) is required as a cofactor.

It is found in the cytoplasm. Its function is as follows. An essential GTPase which binds GTP, GDP and possibly (p)ppGpp with moderate affinity, with high nucleotide exchange rates and a fairly low GTP hydrolysis rate. Plays a role in control of the cell cycle, stress response, ribosome biogenesis and in those bacteria that undergo differentiation, in morphogenesis control. The polypeptide is GTPase Obg (Rhizobium etli (strain ATCC 51251 / DSM 11541 / JCM 21823 / NBRC 15573 / CFN 42)).